Here is a 338-residue protein sequence, read N- to C-terminus: DNA-directed RNA polymerase subunit alpha (338 aa).

Positions 1–233 (MYKNWRELIK…EQLQIFINFD (233 aa)) are alpha N-terminal domain (alpha-NTD). The segment at 250 to 338 (INENLYRSVE…KMIQEGKEDL (89 aa)) is alpha C-terminal domain (alpha-CTD).

This sequence belongs to the RNA polymerase alpha chain family. As to quaternary structure, homodimer. The RNAP catalytic core consists of 2 alpha, 1 beta, 1 beta' and 1 omega subunit. When a sigma factor is associated with the core the holoenzyme is formed, which can initiate transcription.

It carries out the reaction RNA(n) + a ribonucleoside 5'-triphosphate = RNA(n+1) + diphosphate. Functionally, DNA-dependent RNA polymerase catalyzes the transcription of DNA into RNA using the four ribonucleoside triphosphates as substrates. This is DNA-directed RNA polymerase subunit alpha from Syntrophotalea carbinolica (strain DSM 2380 / NBRC 103641 / GraBd1) (Pelobacter carbinolicus).